The sequence spans 500 residues: Hepatic triacylglycerol lipase (500 aa).

A signal peptide spans 1-21; the sequence is MENPLCVSIFLFYCILIQSSA. A disordered region spans residues 23–44; the sequence is GQSLGPESFGRRSRAAETNKTP. N-linked (GlcNAc...) asparagine glycans are attached at residues Asn-67 and Asn-78. The Nucleophile role is filled by Ser-168. Asp-194 serves as the catalytic Charge relay system. An essential for determining substrate specificity region spans residues 254 to 277; the sequence is CHFLELYKHFAKHGLNAITRTVKC. His-279 (charge relay system) is an active-site residue. One can recognise a PLAT domain in the interval 353 to 487; the sequence is YHYQFKIRFI…HPAREKTFVR (135 aa). N-linked (GlcNAc...) asparagine glycosylation is found at Asn-363 and Asn-398.

Belongs to the AB hydrolase superfamily. Lipase family. Homodimer.

The protein localises to the secreted. It carries out the reaction a triacylglycerol + H2O = a diacylglycerol + a fatty acid + H(+). It catalyses the reaction a 1-acyl-sn-glycero-3-phosphocholine + H2O = sn-glycerol 3-phosphocholine + a fatty acid + H(+). The enzyme catalyses a 1,2-diacyl-sn-glycero-3-phosphocholine + H2O = a 2-acyl-sn-glycero-3-phosphocholine + a fatty acid + H(+). The catalysed reaction is 1,2,3-tri-(9Z-octadecenoyl)-glycerol + H2O = di-(9Z)-octadecenoylglycerol + (9Z)-octadecenoate + H(+). It carries out the reaction 1,2-di-(9Z-octadecenoyl)-sn-glycero-3-phosphocholine + H2O = (9Z-octadecenoyl)-sn-glycero-3-phosphocholine + (9Z)-octadecenoate + H(+). It catalyses the reaction 1,2,3-tributanoylglycerol + H2O = dibutanoylglycerol + butanoate + H(+). The enzyme catalyses 1,2-dihexadecanoyl-sn-glycero-3-phosphocholine + H2O = hexadecanoyl-sn-glycero-3-phosphocholine + hexadecanoate + H(+). The catalysed reaction is 1,2-di-(9Z-octadecenoyl)-sn-glycerol + H2O = 2-(9Z-octadecenoyl)-glycerol + (9Z)-octadecenoate + H(+). It carries out the reaction 1,2,3-tri-(9Z-octadecenoyl)-glycerol + H2O = 2,3-di-(9Z)-octadecenoyl-sn-glycerol + (9Z)-octadecenoate + H(+). It catalyses the reaction 1-(9Z-octadecenoyl)-sn-glycero-3-phospho-L-serine + H2O = sn-glycero-3-phospho-L-serine + (9Z)-octadecenoate + H(+). The enzyme catalyses 1-hexadecanoyl-sn-glycero-3-phosphocholine + H2O = sn-glycerol 3-phosphocholine + hexadecanoate + H(+). The catalysed reaction is 1,3-di-(9Z-octadecenoyl)-glycerol + H2O = 3-(9Z-octadecenoyl)-sn-glycerol + (9Z)-octadecenoate + H(+). In terms of biological role, catalyzes the hydrolysis of triglycerides and phospholipids present in circulating plasma lipoproteins, including chylomicrons, intermediate density lipoproteins (IDL), low density lipoproteins (LDL) of large size and high density lipoproteins (HDL), releasing free fatty acids (FFA) and smaller lipoprotein particles. Also exhibits lysophospholipase activity. Can hydrolyze both neutral lipid and phospholipid substrates but shows a greater binding affinity for neutral lipid substrates than phospholipid substrates. In native LDL, preferentially hydrolyzes the phosphatidylcholine species containing polyunsaturated fatty acids at sn-2 position. The sequence is that of Hepatic triacylglycerol lipase (LIPC) from Bos taurus (Bovine).